The following is a 295-amino-acid chain: Cyclic dipyrimidine nucleotide synthase CdnE (295 aa).

The segment at 1–28 (MAKYTEDQLTSWTKPPSDSEQTKLENSE) is disordered. A compositionally biased stretch (polar residues) spans 7–19 (DQLTSWTKPPSDS). Positions 51 and 53 each coordinate UTP. Aspartate 67 serves as a coordination point for Mg(2+). Lysine 123, asparagine 169, arginine 197, phenylalanine 217, and lysine 276 together coordinate UTP. The Pyrimidine specificity motif (R/Q)xW in donor pocket motif lies at 275 to 277 (RKW).

The protein belongs to the CD-NTase family. E02 subfamily. Monomer. Mg(2+) is required as a cofactor.

It carries out the reaction 2 UTP = c-di-UMP + 2 diphosphate. The enzyme catalyses UTP + CTP = cyclic CMP-UMP + 2 diphosphate. Cyclic nucleotide synthase (second messenger synthase) of a CBASS antivirus system. CBASS (cyclic oligonucleotide-based antiphage signaling system) provides immunity against bacteriophage. The CD-NTase protein synthesizes cyclic nucleotides in response to infection; these serve as specific second messenger signals. The signals activate a diverse range of effectors, leading to bacterial cell death and thus abortive phage infection. A type I-B(UU) CBASS system. The polypeptide is Cyclic dipyrimidine nucleotide synthase CdnE (Cecembia lonarensis (strain CCUG 58316 / KCTC 22772 / LW9)).